The following is a 422-amino-acid chain: Glutamate-1-semialdehyde 2,1-aminomutase (422 aa).

N6-(pyridoxal phosphate)lysine is present on Lys265.

Belongs to the class-III pyridoxal-phosphate-dependent aminotransferase family. HemL subfamily. The cofactor is pyridoxal 5'-phosphate.

The protein resides in the cytoplasm. The catalysed reaction is (S)-4-amino-5-oxopentanoate = 5-aminolevulinate. Its pathway is porphyrin-containing compound metabolism; protoporphyrin-IX biosynthesis; 5-aminolevulinate from L-glutamyl-tRNA(Glu): step 2/2. This chain is Glutamate-1-semialdehyde 2,1-aminomutase, found in Methanococcoides burtonii (strain DSM 6242 / NBRC 107633 / OCM 468 / ACE-M).